The chain runs to 534 residues: Lysophosphatidylcholine acyltransferase 1 (534 aa).

The tract at residues 1-25 is disordered; sequence MRLRGRGPRAAPSSSSGAGDARRLA. Topologically, residues 1–57 are cytoplasmic; it reads MRLRGRGPRAAPSSSSGAGDARRLAPPGRNPFVHELRLSALQKAQVAFMTLTLFPIR. Positions 8-19 are enriched in low complexity; the sequence is PRAAPSSSSGAG. Residues 58–78 form a helical; Signal-anchor for type II membrane protein membrane-spanning segment; the sequence is LLFAAFMMLLAWPFALLASLG. Residues 79–534 lie on the Lumenal side of the membrane; sequence PPDKEPEQPL…GRKNSCKKAD (456 aa). Positions 135-140 match the HXXXXD motif motif; that stretch reads HSSYFD. EF-hand domains are found at residues 379–414 and 451–486; these read PVSDALEDMFSLFDESGGGEIDLREYVVALSVVCRP and VSELTVTDLFQAIDQEDKGRITFDDFCGFAEMYPDY. The Ca(2+) site is built by aspartate 392, serine 394, glutamate 398, and glutamate 403. A Di-lysine motif motif is present at residues 531–534; the sequence is KKAD.

The protein belongs to the 1-acyl-sn-glycerol-3-phosphate acyltransferase family. As to expression, predominantly expressed in lung where it is enriched in alveolar type II cells. Expressed at lower levels in spleen and brain. Also detected in erythroleukemic cells and reticulocytes. Weakly or not expressed in other tissues.

The protein resides in the endoplasmic reticulum membrane. Its subcellular location is the golgi apparatus membrane. It localises to the cell membrane. The protein localises to the lipid droplet. The catalysed reaction is a 1-acyl-sn-glycero-3-phosphocholine + an acyl-CoA = a 1,2-diacyl-sn-glycero-3-phosphocholine + CoA. It catalyses the reaction a 1-O-alkyl-sn-glycero-3-phosphocholine + acetyl-CoA = a 1-O-alkyl-2-acetyl-sn-glycero-3-phosphocholine + CoA. It carries out the reaction a 1-acyl-sn-glycero-3-phosphate + an acyl-CoA = a 1,2-diacyl-sn-glycero-3-phosphate + CoA. The enzyme catalyses a 1-O-(1Z-alkenyl)-sn-glycero-3-phosphocholine + an acyl-CoA = a 1-O-(1Z-alkenyl)-2-acyl-sn-glycero-3-phosphocholine + CoA. The catalysed reaction is 1-acyl-sn-glycero-3-phospho-(1'-sn-glycerol) + an acyl-CoA = a 1,2-diacyl-sn-glycero-3-phospho-(1'-sn-glycerol) + CoA. It catalyses the reaction 1-hexadecanoyl-sn-glycero-3-phosphocholine + hexadecanoyl-CoA = 1,2-dihexadecanoyl-sn-glycero-3-phosphocholine + CoA. It carries out the reaction 1-O-hexadecyl-sn-glycero-3-phosphocholine + hexadecanoyl-CoA = 1-O-hexadecyl-2-hexadecanoyl-sn-glycero-3-phosphocholine + CoA. The enzyme catalyses a 1-O-(1Z-alkenyl)-sn-glycero-3-phosphocholine + hexadecanoyl-CoA = 1-O-(1Z)-alkenyl-2-hexadecanoyl-sn-glycero-3-phosphocholine + CoA. The catalysed reaction is 1-hexadecanoyl-sn-glycero-3-phospho-(1'-sn-glycerol) + hexadecanoyl-CoA = 1,2-dihexadecanoyl-sn-glycero-3-phospho-(1'-sn-glycerol) + CoA. It catalyses the reaction 1-dodecanoyl-sn-glycero-3-phosphocholine + hexadecanoyl-CoA = 1-dodecanoyl-2-hexadecanoyl-sn-glycero-3-phosphocholine + CoA. It carries out the reaction 1-tetradecanoyl-sn-glycero-3-phosphocholine + hexadecanoyl-CoA = 1-tetradecanoyl-2-hexadecanoyl-sn-glycero-3-phosphocholine + CoA. The enzyme catalyses 1-O-octadecyl-sn-glycero-3-phosphocholine + hexadecanoyl-CoA = 1-O-octadecyl-2-hexadecanoyl-sn-glycero-3-phosphocholine + CoA. The catalysed reaction is 1-octadecanoyl-sn-glycero-3-phosphocholine + hexadecanoyl-CoA = 1-octadecanoyl-2-hexadecanoyl-sn-glycero-3-phosphocholine + CoA. It catalyses the reaction 1-(9Z-octadecenoyl)-sn-glycero-3-phosphocholine + hexadecanoyl-CoA = 1-(9Z-octadecenoyl)-2-hexadecanoyl-sn-glycero-3-phosphocholine + CoA. It carries out the reaction 1-eicosanoyl-sn-glycero-3-phosphocholine + hexadecanoyl-CoA = 1-eicosanoyl-2-hexadecanoyl-sn-glycero-3-phosphocholine + CoA. The enzyme catalyses hexanoyl-CoA + 1-hexadecanoyl-sn-glycero-3-phosphocholine = 1-hexadecanoyl-2-hexanoyl-sn-glycero-3-phosphocholine + CoA. The catalysed reaction is octanoyl-CoA + 1-hexadecanoyl-sn-glycero-3-phosphocholine = 1-hexadecanoyl-2-octanoyl-sn-glycero-3-phosphocholine + CoA. It catalyses the reaction decanoyl-CoA + 1-hexadecanoyl-sn-glycero-3-phosphocholine = 1-hexadecanoyl-2-decanoyl-sn-glycero-3-phosphocholine + CoA. It carries out the reaction dodecanoyl-CoA + 1-hexadecanoyl-sn-glycero-3-phosphocholine = 1-hexadecanoyl-2-dodecanoyl-sn-glycero-3-phosphocholine + CoA. The enzyme catalyses tetradecanoyl-CoA + 1-hexadecanoyl-sn-glycero-3-phosphocholine = 1-hexadecanoyl-2-tetradecanoyl-sn-glycero-3-phosphocholine + CoA. The catalysed reaction is 1-hexadecanoyl-sn-glycero-3-phosphocholine + (9Z)-octadecenoyl-CoA = 1-hexadecanoyl-2-(9Z-octadecenoyl)-sn-glycero-3-phosphocholine + CoA. It catalyses the reaction (9Z,12Z)-octadecadienoyl-CoA + 1-hexadecanoyl-sn-glycero-3-phosphocholine = 1-hexadecanoyl-2-(9Z,12Z-octadecadienoyl)-sn-glycero-3-phosphocholine + CoA. It carries out the reaction (4Z,7Z,10Z,13Z,16Z,19Z)-docosahexaenoyl-CoA + 1-hexadecanoyl-sn-glycero-3-phosphocholine = 1-hexadecanoyl-2-(4Z,7Z,10Z,13Z,16Z,19Z-docosahexaenoyl)-sn-glycero-3-phosphocholine + CoA. The enzyme catalyses 1-hexadecanoyl-sn-glycero-3-phosphocholine + acetyl-CoA = 1-hexadecanoyl-2-acetyl-sn-glycero-3-phosphocholine + CoA. The catalysed reaction is eicosanoyl-CoA + 1-hexadecanoyl-sn-glycero-3-phosphocholine = 1-hexadecanoyl-2-eicosanoyl-sn-glycero-3-phosphocholine + CoA. It catalyses the reaction 1-O-hexadecyl-sn-glycero-3-phosphocholine + acetyl-CoA = 1-O-hexadecyl-2-acetyl-sn-glycero-3-phosphocholine + CoA. It carries out the reaction a 1-acyl-sn-glycero-3-phosphocholine + hexadecanoyl-CoA = 1-acyl-2-hexadecanoyl-sn-glycero-3-phosphocholine + CoA. The enzyme catalyses a 1-acyl-sn-glycero-3-phosphate + hexadecanoyl-CoA = 1-acyl-2-hexadecanoyl-sn-glycero-3-phosphate + CoA. The catalysed reaction is 1-acyl-sn-glycero-3-phospho-(1'-sn-glycerol) + hexadecanoyl-CoA = 1-acyl-2-hexadecanoyl-sn-glycero-3-phospho-(1'-sn-glycerol) + CoA. The protein operates within lipid metabolism; phospholipid metabolism. Its activity is regulated as follows. Not activated by inflammatory stimulation. Inhibited by Cu(2+), Fe(2+), Ca(2+) and Mg(2+). Activity is not affected by Co(2+) or Mn(2+). Exhibits both acyltransferase and acetyltransferase activities. Activity is calcium-independent. Catalyzes the conversion of lysophosphatidylcholine (1-acyl-sn-glycero-3-phosphocholine or LPC) into phosphatidylcholine (1,2-diacyl-sn-glycero-3-phosphocholine or PC). Catalyzes the conversion 1-acyl-sn-glycerol-3-phosphate (lysophosphatidic acid or LPA) into 1,2-diacyl-sn-glycerol-3-phosphate (phosphatidic acid or PA) by incorporating an acyl moiety at the sn-2 position of the glycerol backbone. Displays a clear preference for saturated fatty acyl-CoAs, and 1-myristoyl or 1-palmitoyl LPC as acyl donors and acceptors, respectively. Involved in platelet-activating factor (PAF) biosynthesis by catalyzing the conversion of the PAF precursor, 1-O-alkyl-sn-glycero-3-phosphocholine (lyso-PAF) into 1-O-alkyl-2-acetyl-sn-glycero-3-phosphocholine (PAF). May synthesize phosphatidylcholine in pulmonary surfactant, thereby playing a pivotal role in respiratory physiology. Involved in the regulation of lipid droplet number and size. The chain is Lysophosphatidylcholine acyltransferase 1 (Lpcat1) from Mus musculus (Mouse).